The sequence spans 99 residues: DNA-binding protein Fis (99 aa).

The tract at residues 1-25 (MFEQKISSEALTTTTSIPATGQITQ) is disordered. Residues 75 to 94 (QTRAATMLGINRGTLRKKLK) constitute a DNA-binding region (H-T-H motif).

It belongs to the transcriptional regulatory Fis family. In terms of assembly, homodimer.

Its function is as follows. Activates ribosomal RNA transcription. Plays a direct role in upstream activation of rRNA promoters. The chain is DNA-binding protein Fis from Psychromonas ingrahamii (strain DSM 17664 / CCUG 51855 / 37).